The chain runs to 126 residues: Aspartate 1-decarboxylase (126 aa).

Ser-25 serves as the catalytic Schiff-base intermediate with substrate; via pyruvic acid. At Ser-25 the chain carries Pyruvic acid (Ser). Thr-57 is a binding site for substrate. The Proton donor role is filled by Tyr-58. 73–75 (GGA) provides a ligand contact to substrate.

This sequence belongs to the PanD family. In terms of assembly, heterooctamer of four alpha and four beta subunits. It depends on pyruvate as a cofactor. Post-translationally, is synthesized initially as an inactive proenzyme, which is activated by self-cleavage at a specific serine bond to produce a beta-subunit with a hydroxyl group at its C-terminus and an alpha-subunit with a pyruvoyl group at its N-terminus.

It localises to the cytoplasm. It catalyses the reaction L-aspartate + H(+) = beta-alanine + CO2. It functions in the pathway cofactor biosynthesis; (R)-pantothenate biosynthesis; beta-alanine from L-aspartate: step 1/1. Its function is as follows. Catalyzes the pyruvoyl-dependent decarboxylation of aspartate to produce beta-alanine. The protein is Aspartate 1-decarboxylase of Xylella fastidiosa (strain 9a5c).